We begin with the raw amino-acid sequence, 678 residues long: DNA ligase (678 aa).

NAD(+) is bound by residues Asp-34–Asp-38, Ser-83–Leu-84, and Glu-114. Lys-116 (N6-AMP-lysine intermediate) is an active-site residue. NAD(+) is bound by residues Arg-137, Glu-176, Lys-293, and Lys-317. The Zn(2+) site is built by Cys-411, Cys-414, Cys-429, and Cys-435. One can recognise a BRCT domain in the interval Pro-594–Ser-678.

This sequence belongs to the NAD-dependent DNA ligase family. LigA subfamily. Requires Mg(2+) as cofactor. Mn(2+) serves as cofactor.

The catalysed reaction is NAD(+) + (deoxyribonucleotide)n-3'-hydroxyl + 5'-phospho-(deoxyribonucleotide)m = (deoxyribonucleotide)n+m + AMP + beta-nicotinamide D-nucleotide.. In terms of biological role, DNA ligase that catalyzes the formation of phosphodiester linkages between 5'-phosphoryl and 3'-hydroxyl groups in double-stranded DNA using NAD as a coenzyme and as the energy source for the reaction. It is essential for DNA replication and repair of damaged DNA. The sequence is that of DNA ligase from Acinetobacter baumannii (strain SDF).